We begin with the raw amino-acid sequence, 459 residues long: Ribulose bisphosphate carboxylase (459 aa).

Asparagine 111 serves as a coordination point for substrate. The active-site Proton acceptor is lysine 166. Lysine 168 is a substrate binding site. The Mg(2+) site is built by lysine 191, aspartate 193, and glutamate 194. Lysine 191 is subject to N6-carboxylysine. The active-site Proton acceptor is histidine 287. Arginine 288, histidine 321, and serine 368 together coordinate substrate.

Belongs to the RuBisCO large chain family. Type II subfamily. In terms of assembly, homodimer. Mg(2+) serves as cofactor.

It localises to the cytoplasm. It catalyses the reaction 2 (2R)-3-phosphoglycerate + 2 H(+) = D-ribulose 1,5-bisphosphate + CO2 + H2O. The enzyme catalyses D-ribulose 1,5-bisphosphate + O2 = 2-phosphoglycolate + (2R)-3-phosphoglycerate + 2 H(+). RuBisCO catalyzes two reactions: the carboxylation of D-ribulose 1,5-bisphosphate, the primary event in carbon dioxide fixation, as well as the oxidative fragmentation of the pentose substrate. Both reactions occur simultaneously and in competition at the same active site. In Halothiobacillus neapolitanus (strain ATCC 23641 / c2) (Thiobacillus neapolitanus), this protein is Ribulose bisphosphate carboxylase.